A 351-amino-acid polypeptide reads, in one-letter code: Protein arginine N-methyltransferase 1-B (351 aa).

Residues K30–V331 enclose the SAM-dependent MTase PRMT-type domain. Positions 43, 52, 76, 98, and 127 each coordinate S-adenosyl-L-methionine. Active-site residues include E142 and E151.

It belongs to the class I-like SAM-binding methyltransferase superfamily. Protein arginine N-methyltransferase family. In terms of assembly, homodimer. Homooctamer; individual homodimers associates to form a homooctamer and homooligomerization is required for proper localization to the cell membrane. Individual homodimers can associate to form a homohexamer. Component of a complex with lsm14a/rap55a. Interacts with cirbp. From the onset of gastrulation, expressed in dorsal mesoderm, and in dorsal and ventral ectoderm. At the neurula and tail bud stages, expression is restricted to the neuroectoderm, with highest expression in the anterior neural plate.

The protein resides in the nucleus. It is found in the nucleoplasm. The protein localises to the cytoplasm. It localises to the cytosol. The catalysed reaction is L-arginyl-[protein] + 2 S-adenosyl-L-methionine = N(omega),N(omega)-dimethyl-L-arginyl-[protein] + 2 S-adenosyl-L-homocysteine + 2 H(+). It carries out the reaction L-arginyl-[protein] + S-adenosyl-L-methionine = N(omega)-methyl-L-arginyl-[protein] + S-adenosyl-L-homocysteine + H(+). The enzyme catalyses N(omega)-methyl-L-arginyl-[protein] + S-adenosyl-L-methionine = N(omega),N(omega)-dimethyl-L-arginyl-[protein] + S-adenosyl-L-homocysteine + H(+). Its function is as follows. Arginine methyltransferase that methylates (mono and asymmetric dimethylation) the guanidino nitrogens of arginyl residues present in target proteins. Constitutes the main enzyme that mediates monomethylation and asymmetric dimethylation of histone H4 'Arg-4' (H4R3me1 and H4R3me2a, respectively), a specific tag for epigenetic transcriptional activation. Methylates ilf3 to regulate its DNA-binding activity. Required for neural induction, playing a key role in the control of epidermal versus neural cell fate choice. This chain is Protein arginine N-methyltransferase 1-B (prmt1-b), found in Xenopus laevis (African clawed frog).